Here is a 460-residue protein sequence, read N- to C-terminus: Cysteine--tRNA ligase (460 aa).

Cysteine 28 is a Zn(2+) binding site. The 'HIGH' region motif lies at 30-40; sequence MTVYDYCHLGH. Positions 209, 234, and 238 each coordinate Zn(2+). A 'KMSKS' region motif is present at residues 266-270; that stretch reads KMSKS. Position 269 (lysine 269) interacts with ATP.

It belongs to the class-I aminoacyl-tRNA synthetase family. Monomer. It depends on Zn(2+) as a cofactor.

Its subcellular location is the cytoplasm. It carries out the reaction tRNA(Cys) + L-cysteine + ATP = L-cysteinyl-tRNA(Cys) + AMP + diphosphate. The polypeptide is Cysteine--tRNA ligase (Pseudomonas syringae pv. syringae (strain B728a)).